We begin with the raw amino-acid sequence, 123 residues long: Integration host factor subunit alpha (123 aa).

The segment at 97 to 123 is disordered; that stretch reads NANGSAPSMSSSASAVDDDKSESASRT. A compositionally biased stretch (low complexity) spans 98–111; it reads ANGSAPSMSSSASA. Over residues 113–123 the composition is skewed to basic and acidic residues; that stretch reads DDDKSESASRT.

It belongs to the bacterial histone-like protein family. Heterodimer of an alpha and a beta chain.

Its function is as follows. This protein is one of the two subunits of integration host factor, a specific DNA-binding protein that functions in genetic recombination as well as in transcriptional and translational control. This is Integration host factor subunit alpha from Rhodopseudomonas palustris (strain BisB5).